Reading from the N-terminus, the 472-residue chain is tRNA-2-methylthio-N(6)-dimethylallyladenosine synthase (472 aa).

The segment at 1-24 (MTGTPDVFPPATPGGAPLVALPAG) is disordered. The MTTase N-terminal domain occupies 33-150 (GKLYIKTHGC…LPELIRARRE (118 aa)). Residues Cys-42, Cys-79, Cys-113, Cys-187, Cys-191, and Cys-194 each coordinate [4Fe-4S] cluster. The region spanning 173-407 (RAEGASAFVS…RINAHAAGIS (235 aa)) is the Radical SAM core domain. One can recognise a TRAM domain in the interval 408 to 471 (EKMVGTVQTV…TNSLRARVVA (64 aa)).

The protein belongs to the methylthiotransferase family. MiaB subfamily. As to quaternary structure, monomer. The cofactor is [4Fe-4S] cluster.

The protein resides in the cytoplasm. It catalyses the reaction N(6)-dimethylallyladenosine(37) in tRNA + (sulfur carrier)-SH + AH2 + 2 S-adenosyl-L-methionine = 2-methylsulfanyl-N(6)-dimethylallyladenosine(37) in tRNA + (sulfur carrier)-H + 5'-deoxyadenosine + L-methionine + A + S-adenosyl-L-homocysteine + 2 H(+). Functionally, catalyzes the methylthiolation of N6-(dimethylallyl)adenosine (i(6)A), leading to the formation of 2-methylthio-N6-(dimethylallyl)adenosine (ms(2)i(6)A) at position 37 in tRNAs that read codons beginning with uridine. The polypeptide is tRNA-2-methylthio-N(6)-dimethylallyladenosine synthase (Stenotrophomonas maltophilia (strain K279a)).